A 327-amino-acid polypeptide reads, in one-letter code: Xylosidase/arabinosidase 43A (327 aa).

The Proton acceptor role is filled by Asp12. Glu228 acts as the Proton donor in catalysis.

It belongs to the glycosyl hydrolase 43 family.

The protein resides in the secreted. It carries out the reaction Hydrolysis of (1-&gt;4)-beta-D-xylans, to remove successive D-xylose residues from the non-reducing termini.. It catalyses the reaction Hydrolysis of terminal non-reducing alpha-L-arabinofuranoside residues in alpha-L-arabinosides.. Activity is inhibited by Ag(+), Li(+), Pb(2+), Cu(2+), Cr(3+), Co(3+), Fe(3+), Ni(2+), Mg(2+), Zn(2+), EDTA and SDS; but not by Mn(2+), Ca(2+) and beta-mercaptoethanol. Functionally, bifunctional beta-xylosidase/alpha-L-arabinosidases with a low level of xylanase activity. Is most active on 4-nitrophenyl beta-D-xylopyranoside (pNPX) (defined as 100%), moderate on p-nitrophenyl-alpha-L-arabinofuranoside (pNPA) (23.7%), and weak on beechwood xylan (15.9%) and birchwood xylan (15.2%). Is able to attack xylooligosacchardies with degrees of polymerisation of 2-5, releasing the amounts of reducing sugars in the order of xylopentose &gt; xylotetraose &gt; xylotriose &gt; xylobiose, i.e. the rate of xylose released from xylooligosacchardies increased with the chain length. No activity is detected in the presence of carboxymethyl cellulose-sodium (CMC-Na), sugar beet arabinan, AZCL-arabinan (debranched), 4-nitrophenyl a-D - galactopyranoside, 2-nitrophenyl beta-D-galactopyranoside, and 4-nitrophenyl alpha-D-glucopyranoside. This Humicola insolens (Soft-rot fungus) protein is Xylosidase/arabinosidase 43A.